The primary structure comprises 416 residues: UDP-N-acetylmuramoylalanine--D-glutamate ligase (416 aa).

Position 108 to 114 (108 to 114 (GTVGKTT)) interacts with ATP.

This sequence belongs to the MurCDEF family.

It is found in the cytoplasm. It catalyses the reaction UDP-N-acetyl-alpha-D-muramoyl-L-alanine + D-glutamate + ATP = UDP-N-acetyl-alpha-D-muramoyl-L-alanyl-D-glutamate + ADP + phosphate + H(+). Its pathway is cell wall biogenesis; peptidoglycan biosynthesis. Its function is as follows. Cell wall formation. Catalyzes the addition of glutamate to the nucleotide precursor UDP-N-acetylmuramoyl-L-alanine (UMA). The chain is UDP-N-acetylmuramoylalanine--D-glutamate ligase from Chlamydia muridarum (strain MoPn / Nigg).